Consider the following 305-residue polypeptide: UDP-3-O-acyl-N-acetylglucosamine deacetylase (305 aa).

Residues His78, His237, and Asp241 each coordinate Zn(2+). The active-site Proton donor is His264.

This sequence belongs to the LpxC family. Zn(2+) is required as a cofactor.

The enzyme catalyses a UDP-3-O-[(3R)-3-hydroxyacyl]-N-acetyl-alpha-D-glucosamine + H2O = a UDP-3-O-[(3R)-3-hydroxyacyl]-alpha-D-glucosamine + acetate. It participates in glycolipid biosynthesis; lipid IV(A) biosynthesis; lipid IV(A) from (3R)-3-hydroxytetradecanoyl-[acyl-carrier-protein] and UDP-N-acetyl-alpha-D-glucosamine: step 2/6. Its function is as follows. Catalyzes the hydrolysis of UDP-3-O-myristoyl-N-acetylglucosamine to form UDP-3-O-myristoylglucosamine and acetate, the committed step in lipid A biosynthesis. In Paraburkholderia phymatum (strain DSM 17167 / CIP 108236 / LMG 21445 / STM815) (Burkholderia phymatum), this protein is UDP-3-O-acyl-N-acetylglucosamine deacetylase.